We begin with the raw amino-acid sequence, 2430 residues long: MYLYKSIKSYKMQGKSKRKKEAFPTSKACGKLGKNRIFPLEEKRSGKKERPLALSFQASFFSPFFLFANCTRKTKTLKQNSLSLSSSYLNIFSDFSLYSLSPKKKTSLTDNKIVSFATKDFPQVFWNLSFNKGSLKNFVFWCFVNYGQRETIKILEKLQIIGFGYATKAGISLSIDDLKIPPTKAILLADADKSIEAGFLSYKKSQLTGLERFQRIIETWHKTSESLKDEMITNFRQTDSLNPVYMMAFSGARGNVSQVRQLVAMRGLMSDPQGKILDFPIRSNFREGLTLTEYVISCYGARKGVVDTALRTANAGYLTRRLVDVAQHVIVLNFDCGTKKGFYLTEMKKFNKTLYPLRQRLLGRVLAANLYNVNPFHLKKRIEIGEKEKNLSSLPSSKGKMEFFPSFPQASLAGKASCFPEPQIVAFRNQEISEPLAEKISKITNKVFIRSPLTCDTPRLVCQLCYGWSLSEGYLVSIGEAVGIIAAQSIGEPGTQLTMRTFHTGGVFAGEMFDQLMAPYDGIVQYSSSIPGTLVRTTQGKIAFLTKVEGKLSVFEKNNSTFLSNSNNGDNHSLISHTISHKSFKLPAYTLLFIRNNETISKDQLIAELAFLSSKGKKKGEIAEFIVKSEIEGQLYSGSVNILEKYTDYNDIMTKSIDWGSVWILSGKICQLPVNSSFFALPGDLVDENAILSQIQWVVPMKSLLDTNSLIKPNLKKEIYFDFSLNQTKWFQKRNLENLNTLFNLKFGIEKKNRTKKRVLSQEKKSDFLNPSFSHSSRNYLYFSLPSKKTFSYYPFAYFSKIKEKNGGRETKSSFAMSGWGKKSLSFFPSLASDVPKLLSDFYPTSKKRNFKSFEKKELKLSSFSQTIFFNQDKSLLLKMKIKIQTISDFTKVSSKMITSRELKKNGMEKGKNGEKENSSLQRTFFSQGAKAPAFPELFSFFSSRLFPILPFKSSLVSSTFSHNSQLCTIRRQNKLVLSGNSNQFENFAYLKDKITINLPLIFLCIDNIYYKKIGYFFSLFPPESKIPREKFLPEEEGFSPPSFGRTFKNKNLAKLKDVFFVPKLLEQRNIISTKKKNSFKKNNQISNQLLHWFPKSYLTMKGGICVYRLTHDFFCQYINFHSSSFLFEKKRGTLICNVDGEMNKPVSSNILGRICWVNQDYKKTKLYTLKFFSYSKFIQQLTDRTKRLQRQIKREKKIGQADFFQTVLSMSQAKEKSSLQRTFFSQGAKSRKKVPPKTLLSGEMPIFSLSPSLCGLKPAKRSEKEKIWVKGEKAELFSLSNAFHQPQHSKKHKYSSFSLNFYKNLTSYCLKNKDKSVANCFSEKKKRQFLFFSEPKLSLFPDFLFSKSEKNIFYNANKKKYSFFYLKKTNSSKKSLTNNSIMNGFIYKPKDVVSAISLHKKFFLPGQKIIDDLSFDNFLIYVECIPEDNLSSLSETLYKSRFDKKICFNLKKLITNKMPRFIKIPTLLSTIPFAFLKSEFKEQNEKIAQRKADRQKNNKKSEAFFFKSNTLVSDFDSPFLSHLVVLITKVIEYPLYKPNHYKKALYNRQKTSEQSFFHYSCKVKSKMLNKIFKNNYHSNVLNKQTSSLRLLDKFPNTDLVLALKCKGIQKDLMENFLKNPLNLNLYVKLGKQKSFGKEKDKTFSVSQPFFKSSAFKKEKKSNSFSQAKAFDFNLTSKKSRKKANKLVENLANGKKSRAFPASKACGKLGKNYIFPLEERKNGKKERAKASSFPGLLSFSHLAFPIFFRKSFSKFFCMKFFSKSSIQLLELVLVGVQKNSVNNKIIGITVFNFFQKNKLKEEEKKRQEEKEIFRSLSLSPLFLSHLTRKKNSDFFSVSKSEALEKKKLQLLFFSHAAFPLKEISKNYSSKASFLSFFHFLDKKIKKQTRRQANFVVSAFEKSDFSFDPNINRKKKYFSNKAFNYENIKIMNNNISQSILQPNFYFNYYQKYPFGYYLINNINVFAPSSFSFSSLFSRNTANFKNYFLFYQLLSMFNRPNFQLHKSMEENLLQVYEQSTSYFSLISCFFQQPCFDAFFTQQVSFGFNEVKNVNHYSKNLTFSKKIGKRREFYLSPFLRSKIYFKKNSFSEQGEIALTQYLSPFMGEILNHENYYWSQNTQKNRYLLLTKKDQISFLSTNYNTQKESINNSSFFILKNKKNTPNLGEFLTKGDCCFISKSQNSIISSESGLIVHSNKSKITLRKAQSFFLSPNCIFHYSHGDLVEKNKSILSLPYEQLKTGDIVQGIPKVEQLLEARSTFKGKEEEDNLHKLLKYAFELYKTKFSLKLSVRKSFSFIQLILVNSVQRIYRSQGVSISDKHLEVIVKQMTSKVQITSRGDSSFFRGEHVDLYIVETWNALHPQLKKICYKPILLGISRSSLEVNSFLSAASFQHTKKVLSRSAFKTNIDFLNGLKENVIIGNLISAGTGNLNN.

Positions 336, 455, 462, and 465 each coordinate Zn(2+).

This sequence belongs to the RNA polymerase beta' chain family. RpoC2 subfamily. As to quaternary structure, in plastids the minimal PEP RNA polymerase catalytic core is composed of four subunits: alpha, beta, beta', and beta''. When a (nuclear-encoded) sigma factor is associated with the core the holoenzyme is formed, which can initiate transcription. The cofactor is Zn(2+).

The protein localises to the plastid. It localises to the chloroplast. It catalyses the reaction RNA(n) + a ribonucleoside 5'-triphosphate = RNA(n+1) + diphosphate. Its function is as follows. DNA-dependent RNA polymerase catalyzes the transcription of DNA into RNA using the four ribonucleoside triphosphates as substrates. The polypeptide is DNA-directed RNA polymerase subunit beta'' (Stigeoclonium helveticum (Green alga)).